A 271-amino-acid chain; its full sequence is 2-dehydro-3-deoxyphosphooctonate aldolase (271 aa).

This sequence belongs to the KdsA family.

The protein localises to the cytoplasm. It carries out the reaction D-arabinose 5-phosphate + phosphoenolpyruvate + H2O = 3-deoxy-alpha-D-manno-2-octulosonate-8-phosphate + phosphate. The protein operates within carbohydrate biosynthesis; 3-deoxy-D-manno-octulosonate biosynthesis; 3-deoxy-D-manno-octulosonate from D-ribulose 5-phosphate: step 2/3. It functions in the pathway bacterial outer membrane biogenesis; lipopolysaccharide biosynthesis. In Campylobacter jejuni subsp. jejuni serotype O:2 (strain ATCC 700819 / NCTC 11168), this protein is 2-dehydro-3-deoxyphosphooctonate aldolase.